Here is a 455-residue protein sequence, read N- to C-terminus: Bifunctional protein GlmU (455 aa).

The pyrophosphorylase stretch occupies residues 1 to 226 (MSLDIVILAA…PMEVQGANDR (226 aa)). UDP-N-acetyl-alpha-D-glucosamine contacts are provided by residues 8–11 (LAAG), K22, Q73, 78–79 (GT), 99–101 (YGD), G136, E151, N166, and N224. A Mg(2+)-binding site is contributed by D101. N224 provides a ligand contact to Mg(2+). Residues 227–247 (RQLSELERHYQLREGRRLMAQ) form a linker region. An N-acetyltransferase region spans residues 248 to 455 (GVTLRDPARF…WKRPEKTKKS (208 aa)). 2 residues coordinate UDP-N-acetyl-alpha-D-glucosamine: R330 and K348. H360 functions as the Proton acceptor in the catalytic mechanism. UDP-N-acetyl-alpha-D-glucosamine contacts are provided by Y363 and N374. Acetyl-CoA contacts are provided by residues A377, 383-384 (NY), S402, A420, and R437.

In the N-terminal section; belongs to the N-acetylglucosamine-1-phosphate uridyltransferase family. The protein in the C-terminal section; belongs to the transferase hexapeptide repeat family. Homotrimer. Mg(2+) is required as a cofactor.

The protein localises to the cytoplasm. It catalyses the reaction alpha-D-glucosamine 1-phosphate + acetyl-CoA = N-acetyl-alpha-D-glucosamine 1-phosphate + CoA + H(+). The enzyme catalyses N-acetyl-alpha-D-glucosamine 1-phosphate + UTP + H(+) = UDP-N-acetyl-alpha-D-glucosamine + diphosphate. The protein operates within nucleotide-sugar biosynthesis; UDP-N-acetyl-alpha-D-glucosamine biosynthesis; N-acetyl-alpha-D-glucosamine 1-phosphate from alpha-D-glucosamine 6-phosphate (route II): step 2/2. It participates in nucleotide-sugar biosynthesis; UDP-N-acetyl-alpha-D-glucosamine biosynthesis; UDP-N-acetyl-alpha-D-glucosamine from N-acetyl-alpha-D-glucosamine 1-phosphate: step 1/1. It functions in the pathway bacterial outer membrane biogenesis; LPS lipid A biosynthesis. Its function is as follows. Catalyzes the last two sequential reactions in the de novo biosynthetic pathway for UDP-N-acetylglucosamine (UDP-GlcNAc). The C-terminal domain catalyzes the transfer of acetyl group from acetyl coenzyme A to glucosamine-1-phosphate (GlcN-1-P) to produce N-acetylglucosamine-1-phosphate (GlcNAc-1-P), which is converted into UDP-GlcNAc by the transfer of uridine 5-monophosphate (from uridine 5-triphosphate), a reaction catalyzed by the N-terminal domain. The chain is Bifunctional protein GlmU from Pseudomonas putida (strain GB-1).